A 355-amino-acid chain; its full sequence is 4-hydroxy-3-methylbut-2-en-1-yl diphosphate synthase (flavodoxin) (355 aa).

Residues cysteine 266, cysteine 269, cysteine 301, and glutamate 308 each contribute to the [4Fe-4S] cluster site.

It belongs to the IspG family. Requires [4Fe-4S] cluster as cofactor.

The enzyme catalyses (2E)-4-hydroxy-3-methylbut-2-enyl diphosphate + oxidized [flavodoxin] + H2O + 2 H(+) = 2-C-methyl-D-erythritol 2,4-cyclic diphosphate + reduced [flavodoxin]. It functions in the pathway isoprenoid biosynthesis; isopentenyl diphosphate biosynthesis via DXP pathway; isopentenyl diphosphate from 1-deoxy-D-xylulose 5-phosphate: step 5/6. Converts 2C-methyl-D-erythritol 2,4-cyclodiphosphate (ME-2,4cPP) into 1-hydroxy-2-methyl-2-(E)-butenyl 4-diphosphate. This Caldanaerobacter subterraneus subsp. tengcongensis (strain DSM 15242 / JCM 11007 / NBRC 100824 / MB4) (Thermoanaerobacter tengcongensis) protein is 4-hydroxy-3-methylbut-2-en-1-yl diphosphate synthase (flavodoxin).